Reading from the N-terminus, the 274-residue chain is NADPH-dependent 7-cyano-7-deazaguanine reductase (274 aa).

80–82 (VES) provides a ligand contact to substrate. 82-83 (SK) provides a ligand contact to NADPH. C181 acts as the Thioimide intermediate in catalysis. D188 serves as the catalytic Proton donor. A substrate-binding site is contributed by 220–221 (HE). 249–250 (RG) is a binding site for NADPH.

Belongs to the GTP cyclohydrolase I family. QueF type 2 subfamily. In terms of assembly, homodimer.

It is found in the cytoplasm. The enzyme catalyses 7-aminomethyl-7-carbaguanine + 2 NADP(+) = 7-cyano-7-deazaguanine + 2 NADPH + 3 H(+). It participates in tRNA modification; tRNA-queuosine biosynthesis. Its function is as follows. Catalyzes the NADPH-dependent reduction of 7-cyano-7-deazaguanine (preQ0) to 7-aminomethyl-7-deazaguanine (preQ1). The chain is NADPH-dependent 7-cyano-7-deazaguanine reductase from Burkholderia pseudomallei (strain 1106a).